Consider the following 142-residue polypeptide: uncharacterized protein (142 aa).

The next 2 membrane-spanning stretches (helical) occupy residues 12-29 (NAIL…YGLL) and 44-66 (IYGQ…GVTA).

The protein resides in the cell membrane. This is an uncharacterized protein from Archaeoglobus fulgidus (strain ATCC 49558 / DSM 4304 / JCM 9628 / NBRC 100126 / VC-16).